Consider the following 169-residue polypeptide: Fumarase E (169 aa).

This sequence belongs to the MtlR/FumE family.

It catalyses the reaction (S)-malate = fumarate + H2O. Functionally, in vitro catalyzes the addition of water to fumarate, forming malate. Cannot catalyze the reverse reaction. Cannot use the cis-isomer maleate as substrate. This chain is Fumarase E, found in Escherichia coli (strain K12).